The primary structure comprises 224 residues: CRIB domain-containing protein RIC1 (224 aa).

Positions 29–42 constitute a CRIB domain; sequence IGFPTDVKHVAHIG. Residues 38-224 are disordered; the sequence is VAHIGSDGPT…SVDTTCNDII (187 aa). Polar residues-rich tracts occupy residues 69 to 84, 114 to 132, 144 to 155, and 215 to 224; these read SRGN…TNQR, PNHN…ASSD, AHGSTDSSNDQE, and SVDTTCNDII.

In terms of assembly, interacts with ARAC11/ROP1. As to expression, expressed in columella cells from the root tip and epidermal cells at the base of lateral roots, leaves, stems, flowers, anthers, pollen and siliques.

It is found in the cytoplasm. The protein localises to the cytoskeleton. Functions as a downstream effector of Rho-related GTP binding proteins of the 'Rho of Plants' (ROPs) family. Participates in the propagation of ROP GTPase signals in specific cellular responses. Required for cortical microtubule organization. Promotes microtubule bundling and formation of well-ordered microtubule arrays in the neck region of pavement cells. This restricts cell lateral expansion to generate the narrow neck morphology of pavement cells. Its function is inhibited when it interacts with activated ARAC4/ROP2. Represses ARAC4/ROP2 activation and antagonizes the RIC4-actin pathway that promotes the assembly of cortical actin microfilaments. Acts as a downstream effector of ARAC3/ROP6 which functions in a signaling pathway that negatively regulates clathrin-mediated endocytosis and internalization of PIN1 and PIN2. Required for the asymmetric auxin distribution during root gravitropism and vascular patterning. Positively regulates auxin responses, but negatively regulates ABA responses during lateral root development and primary root elongation. The polypeptide is CRIB domain-containing protein RIC1 (RIC1) (Arabidopsis thaliana (Mouse-ear cress)).